Consider the following 552-residue polypeptide: uncharacterized protein (552 aa).

This sequence belongs to the transposase 25 family.

This is an uncharacterized protein from Sinorhizobium fredii (strain NBRC 101917 / NGR234).